Here is a 617-residue protein sequence, read N- to C-terminus: Dihydroxy-acid dehydratase (617 aa).

Asp-81 lines the Mg(2+) pocket. Residue Cys-122 participates in [2Fe-2S] cluster binding. Residues Asp-123 and Lys-124 each coordinate Mg(2+). N6-carboxylysine is present on Lys-124. Cys-195 lines the [2Fe-2S] cluster pocket. Glu-491 is a binding site for Mg(2+). The active-site Proton acceptor is Ser-517.

It belongs to the IlvD/Edd family. As to quaternary structure, homodimer. The cofactor is [2Fe-2S] cluster. It depends on Mg(2+) as a cofactor.

It catalyses the reaction (2R)-2,3-dihydroxy-3-methylbutanoate = 3-methyl-2-oxobutanoate + H2O. It carries out the reaction (2R,3R)-2,3-dihydroxy-3-methylpentanoate = (S)-3-methyl-2-oxopentanoate + H2O. The protein operates within amino-acid biosynthesis; L-isoleucine biosynthesis; L-isoleucine from 2-oxobutanoate: step 3/4. It functions in the pathway amino-acid biosynthesis; L-valine biosynthesis; L-valine from pyruvate: step 3/4. Its function is as follows. Functions in the biosynthesis of branched-chain amino acids. Catalyzes the dehydration of (2R,3R)-2,3-dihydroxy-3-methylpentanoate (2,3-dihydroxy-3-methylvalerate) into 2-oxo-3-methylpentanoate (2-oxo-3-methylvalerate) and of (2R)-2,3-dihydroxy-3-methylbutanoate (2,3-dihydroxyisovalerate) into 2-oxo-3-methylbutanoate (2-oxoisovalerate), the penultimate precursor to L-isoleucine and L-valine, respectively. The chain is Dihydroxy-acid dehydratase from Buchnera aphidicola subsp. Schizaphis graminum (strain Sg).